The sequence spans 694 residues: Polyphosphate kinase (694 aa).

Residue N45 coordinates ATP. 2 residues coordinate Mg(2+): R367 and R397. Catalysis depends on H427, which acts as the Phosphohistidine intermediate. Y460, R553, and H580 together coordinate ATP.

Belongs to the polyphosphate kinase 1 (PPK1) family. Mg(2+) is required as a cofactor. An intermediate of this reaction is the autophosphorylated ppk in which a phosphate is covalently linked to a histidine residue through a N-P bond.

It catalyses the reaction [phosphate](n) + ATP = [phosphate](n+1) + ADP. Its function is as follows. Catalyzes the reversible transfer of the terminal phosphate of ATP to form a long-chain polyphosphate (polyP). In Campylobacter jejuni subsp. doylei (strain ATCC BAA-1458 / RM4099 / 269.97), this protein is Polyphosphate kinase.